We begin with the raw amino-acid sequence, 933 residues long: Protein translocase subunit SecA (933 aa).

ATP contacts are provided by residues glutamine 87, 105 to 109 (GEGKT), and aspartate 515. The Zn(2+) site is built by cysteine 917, cysteine 919, cysteine 928, and histidine 929.

This sequence belongs to the SecA family. As to quaternary structure, monomer and homodimer. Part of the essential Sec protein translocation apparatus which comprises SecA, SecYEG and auxiliary proteins SecDF-YajC and YidC. Zn(2+) is required as a cofactor.

The protein resides in the cell inner membrane. Its subcellular location is the cytoplasm. It catalyses the reaction ATP + H2O + cellular proteinSide 1 = ADP + phosphate + cellular proteinSide 2.. Part of the Sec protein translocase complex. Interacts with the SecYEG preprotein conducting channel. Has a central role in coupling the hydrolysis of ATP to the transfer of proteins into and across the cell membrane, serving both as a receptor for the preprotein-SecB complex and as an ATP-driven molecular motor driving the stepwise translocation of polypeptide chains across the membrane. The protein is Protein translocase subunit SecA of Burkholderia cenocepacia (strain ATCC BAA-245 / DSM 16553 / LMG 16656 / NCTC 13227 / J2315 / CF5610) (Burkholderia cepacia (strain J2315)).